The following is a 421-amino-acid chain: MAPQMQILSEELIQPSSPTPQTLKTHKLSHLDQVLLTCHIPIILFYPNQLDSNLDRAQRSENLKRSLSTVLTQFYPLAGRININSSVDCNDSGVPFLEARVHSQLSEAIKNVAIDELNQYLPFQPYPGGEESGLKKDIPLAVKISCFECGGTAIGVCISHKIADALSLATFLNSWTATCQEETDIVQPNFDLGSHHFPPMESIPAPEFLPDENIVMKRFVFDKEKLEALKAQLASSATEVKNSSRVQIVIAVIWKQFIDVTRAKFDTKNKLVAAQAVNLRSRMNPPFPQSAMGNIATMAYAVAEEDKDFSDLVGPLKTSLAKIDDEHVKELQKGVTYLDYEAEPQELFSFSSWCRLGFYDLDFGWGKPVSVCTTTVPMKNLVYLMDTRNEDGMEAWISMAEDEMSMLSSDFLSLLDTDFSN.

Positions 1 to 21 are disordered; the sequence is MAPQMQILSEELIQPSSPTPQ. Active-site proton acceptor residues include His160 and Asp362.

The protein belongs to the plant acyltransferase family. Monomer. Expressed in leaf epidermis.

The catalysed reaction is 15alpha-stemmadenine + acetyl-CoA = O-acetyl-15alpha-stemmadenine + CoA. It functions in the pathway alkaloid biosynthesis. In terms of biological role, component of iboga and aspidosperma monoterpenoid indole alkaloids (MIAs, e.g. tabersonine and catharanthine) biosynthesis pathway from 19E-geissoschizine. Acetyltransferase that catalyzes the formation of O-acetylstemmadenine from stemmadenine. In Catharanthus roseus (Madagascar periwinkle), this protein is Stemmadenine O-acetyltransferase.